A 388-amino-acid polypeptide reads, in one-letter code: Splicing factor 3B subunit 4 (388 aa).

2 RRM domains span residues 13–91 and 100–179; these read ATIY…KASA and ANIF…YAFK. The segment at 244–388 is disordered; it reads QPPPLMGMAQ…GMIPPPPPPS (145 aa). 3 stretches are compositionally biased toward pro residues: residues 261–325, 333–355, and 362–388; these read PPVP…PSRF, MPPPPPPGMRYPGGMPPPPPPRY, and MYPPPPPSRPPAPPSGHGMIPPPPPPS.

It belongs to the SF3B4 family.

The protein localises to the nucleus. Subunit of the splicing factor SF3B required for 'A' complex assembly formed by the stable binding of U2 snRNP to the branchpoint sequence (BPS) in pre-mRNA. Sequence independent binding of SF3A/SF3B complex upstream of the branch site is essential, it may anchor U2 snRNP to the pre-mRNA. May also be involved in the assembly of the 'E' complex. SF3B4 has been found in complex 'B' and 'C' as well. Belongs also to the minor U12-dependent spliceosome, which is involved in the splicing of rare class of nuclear pre-mRNA intron. The sequence is that of Splicing factor 3B subunit 4 (sap-49) from Caenorhabditis elegans.